The primary structure comprises 293 residues: MEPASLENLSVLYQSTNYIVVNKHWDIRIDSKMWYEKQTVQSQLKHHFPELADPGTYYGFRFCHQLDFSTSGALCVALNKAAAGQAYRCFKDRRVTKAYLALVRGTVTEENLSLDFAIGKNTTEGKTHMMCTEGTEGCENPKPCQTEVTVLEYGTYDGDQVTKVLLQPLTGRTHQLRVHCSAIGHPIVGDYTYSLRTDNSPYRMMLHAYFLHIPLHNEPIHVTAPDPFVPSLDAKWAPLRCVNILEDLLKNILTKLQAAMQEEAEPEPRTSSPVESEEQRAQCQQWLCEWSLE.

Asp-67 is an active-site residue.

It belongs to the pseudouridine synthase RluA family.

In Danio rerio (Zebrafish), this protein is RNA pseudouridylate synthase domain-containing protein 1 (rpusd1).